A 98-amino-acid chain; its full sequence is Complement inhibitor RaCI2 (98 aa).

The first 21 residues, 1–21 (MNAVTVLAFTAFALIVHDCYS), serve as a signal peptide directing secretion. 3 disulfides stabilise this stretch: Cys-35–Cys-59, Cys-40–Cys-61, and Cys-55–Cys-76.

It belongs to the RaCI family. As to expression, expressed in salivary glands.

It localises to the secreted. Functionally, complement inhibitor. Prevents complement-mediated C5 activation by binding to C5. Binds C5 at a different binding site than the other tick complement inhibitors OmCI and CirpT1, and the drug eculizumab. The protein is Complement inhibitor RaCI2 of Rhipicephalus microplus (Cattle tick).